Reading from the N-terminus, the 571-residue chain is Urease subunit alpha (571 aa).

One can recognise a Urease domain in the interval Gly133–Phe571. 3 residues coordinate Ni(2+): His138, His140, and Lys221. Lys221 bears the N6-carboxylysine mark. Residue His223 coordinates substrate. Ni(2+) contacts are provided by His250 and His276. His324 (proton donor) is an active-site residue. Asp364 is a binding site for Ni(2+).

This sequence belongs to the metallo-dependent hydrolases superfamily. Urease alpha subunit family. In terms of assembly, heterotrimer of UreA (gamma), UreB (beta) and UreC (alpha) subunits. Three heterotrimers associate to form the active enzyme. Ni cation is required as a cofactor. Carboxylation allows a single lysine to coordinate two nickel ions.

The protein resides in the cytoplasm. The enzyme catalyses urea + 2 H2O + H(+) = hydrogencarbonate + 2 NH4(+). It functions in the pathway nitrogen metabolism; urea degradation; CO(2) and NH(3) from urea (urease route): step 1/1. The sequence is that of Urease subunit alpha from Staphylococcus aureus (strain USA300).